Consider the following 610-residue polypeptide: MTTAAIRGLQGEAPTKNKELLNWIADAVELFQPEAVVFVDGSQAEWDRMAEDLVEAGTLIKLNEEKRPNSYLARSNPSDVARVESRTFICSEKEEDAGPTNNWAPPQAMKDEMSKHYAGSMKGRTMYVVPFCMGPISDPDPKLGVQLTDSEYVVMSMRIMTRMGIEALDKIGANGSFVRCLHSVGAPLEPGQEDVAWPCNDTKYITQFPETKEIWSYGSGYGGNAILAKKCYALRIASVMAREEGWMAEHMLILKLINPEGKAYHIAAAFPSACGKTNLAMITPTIPGWTAQVVGDDIAWLKLREDGLYAVNPENGFFGVAPGTNYASNPIAMKTMEPGNTLFTNVALTDDGDIWWEGMDGDAPAHLIDWMGNDWTPESDENAAHPNSRYCVAIDQSPAAAPEFNDWEGVKIDAILFGGRRADTVPLVTQTYDWEHGTMVGALLASGQTAASAEAKVGTLRHDPMAMLPFIGYNAGEYLQNWIDMGNKGGDKMPSIFLVNWFRRGEDGRFLWPGFGDNSRVLKWVIDRIEGHVGADETVVGHTAKAEDLDLDGLDTPIEDVKEALTAPAEQWANDVEDNAEYLTFLGPRVPAEVHSQFDALKARISAAHA.

Substrate is bound by residues R82 and 221–223 (YGG). Mn(2+) is bound by residues K230 and H250. S272 is a substrate binding site. 273-278 (ACGKTN) serves as a coordination point for GTP. The active site involves C274. D297 is a binding site for Mn(2+). Residue 387–389 (NSR) coordinates substrate. GTP is bound by residues R389, R420, and 515–518 (FGDN).

This sequence belongs to the phosphoenolpyruvate carboxykinase [GTP] family. As to quaternary structure, monomer. Requires Mn(2+) as cofactor.

It localises to the cytoplasm. It catalyses the reaction oxaloacetate + GTP = phosphoenolpyruvate + GDP + CO2. The protein operates within carbohydrate biosynthesis; gluconeogenesis. Its function is as follows. Involved in the gluconeogenesis. Catalyzes the conversion of oxaloacetate (OAA) to phosphoenolpyruvate (PEP), the rate-limiting step in the metabolic pathway that produces glucose from lactate and other precursors derived from the citric acid cycle. The polypeptide is Phosphoenolpyruvate carboxykinase [GTP] (Corynebacterium glutamicum (strain ATCC 13032 / DSM 20300 / JCM 1318 / BCRC 11384 / CCUG 27702 / LMG 3730 / NBRC 12168 / NCIMB 10025 / NRRL B-2784 / 534)).